Reading from the N-terminus, the 208-residue chain is Methionine-R-sulfoxide reductase B1 (208 aa).

Residues 27–36 (QDSDNPDKRY) are compositionally biased toward basic and acidic residues. Residues 27–48 (QDSDNPDKRYSGPAATMDNKSE) are disordered. Residues 54-188 (KEELRKRLTP…NSASIEFVNA (135 aa)) enclose the MsrB domain. 4 residues coordinate Zn(2+): C93, C96, C154, and C157. C111 and C177 form a disulfide bridge. C177 (nucleophile) is an active-site residue. Residues 189-208 (DPATSSPPVATPTAAPIAQQ) form a disordered region.

Belongs to the MsrB Met sulfoxide reductase family. Zn(2+) serves as cofactor. As to expression, present in the embryonic nervous system (brain and cord) in neuronal cell bodies, along axons. Also present in embryonic muscles in motor axons. Localizes to growing bristle tips where it is distributed in small puntae. Present at and at sites of actin localization.

It localises to the cytoplasm. It is found in the nucleus. The protein localises to the cytoskeleton. The enzyme catalyses L-methionyl-[protein] + [thioredoxin]-disulfide + H2O = L-methionyl-(R)-S-oxide-[protein] + [thioredoxin]-dithiol. Functionally, methionine-sulfoxide reductase that specifically reduces methionine (R)-sulfoxide back to methionine. While in many cases methionine oxidation is the result of random oxidation following oxidative stress, methionine oxidation is also a post-translational modification that takes place on specific residues. Acts as a regulator of actin assembly by reducing methionine (R)-sulfoxide mediated by Mical on actin thereby promoting filament repolymerization. This Drosophila melanogaster (Fruit fly) protein is Methionine-R-sulfoxide reductase B1 (SelR).